A 653-amino-acid chain; its full sequence is Pentatricopeptide repeat-containing protein At3g14730 (653 aa).

PPR repeat units lie at residues 59–93 (NVAT…GFLD), 95–119 (SPRA…VLVF), 125–159 (DVFG…GILP), 160–193 (DKYT…GFDS), 194–224 (DCYV…LPDR), 226–260 (DSVL…GVGV), 261–295 (SRHT…GSGS), 296–326 (DIVV…MDER), 327–361 (DLFT…GIRP), 362–396 (DIVT…GLLN), 401–431 (NEFI…MRVK), 432–466 (DSAS…GVKP), 467–497 (DEIT…METV), and 503–537 (TSDH…DNPV). Residues 538–613 (VWRSILSSCR…TPGCSWIVLK (76 aa)) form a type E motif region. Residues 614 to 644 (NGVHTFFTGNQTHPEFKSIHDWLSLVISHMH) are type E(+) motif.

This sequence belongs to the PPR family. PCMP-E subfamily.

This chain is Pentatricopeptide repeat-containing protein At3g14730 (PCMP-E31), found in Arabidopsis thaliana (Mouse-ear cress).